Here is a 538-residue protein sequence, read N- to C-terminus: Cytochrome P450 monooxygenase xanG (538 aa).

Residues 44-64 (MILYYLASIPLAIICYLAWYL) form a helical membrane-spanning segment. N-linked (GlcNAc...) asparagine glycosylation occurs at Asn378. Residue Cys489 coordinates heme.

It belongs to the cytochrome P450 family. Requires heme as cofactor.

It is found in the membrane. It participates in secondary metabolite biosynthesis. In terms of biological role, cytochrome P450 monooxygenase; part of the gene cluster that mediates the biosynthesis of the isocyanide xanthocillin and its derivatives. The first step of the pathway consists in the conversion of tyrosine into a vinyl-isonitrile intermediate by the isocyanide synthase xanB. Subsequent oxidative dimerization of this intermediate to form xanthocillin may involve the cytochrome P450 monooxygenase xanG, whose expression is coregulated with that of XanB. Xanthocillin can be further modified by the isonitrile hydratase-like protein xanA which introduces N-formyl groups and the methyltransferase xanE which introduces methyl groups, leading to the production of several derivatives including fumiformamide. Finally, fumiformamide can be subject to both oxidative and reductive cyclization to yield melanocins E and F, respectively. In Aspergillus fumigatus (strain ATCC MYA-4609 / CBS 101355 / FGSC A1100 / Af293) (Neosartorya fumigata), this protein is Cytochrome P450 monooxygenase xanG.